Reading from the N-terminus, the 536-residue chain is MRLRNGTVATALVFITTFLSLSWYTAWQNGKEKLMAYQREFHALKERLRIAEHRTLQRSSELHAILDHFRRMIKEANGSRDALNHFSDETQKLIKDLTNRKALQVPNIYYHMPHLLNHDGSLQPAVQVGLGRTGVSVVMGIPTVKRRVKSYLKETLHSLIDKLSPEEKLDCVIIVFVGETDLEYVNSVVASLQKEFATEISSGLVEVISPPATYYPDLNNLKETFGDSKERVRWRTKQNLDYCFLMMYAQRKGIYYIQLEDDIVAKQNYFSTIKNFALQLSSEDWMILEFSQLGFIGKMFQAPDITLIVEFILMFYKEKPIDWLLDHILWVKVCNPEKDAKHCDRQKSNLRIRFRPSLFQHVGLHSSLAGKIQKLTDKDFLKPLLHKIHVNPPAEVSTSLKVYQGHTLEKTYLGEDFFWAITPVAGDYILFKFDKPVNVERYLFRSGNPEHPGDQLWNTTVEVLPYRKDIVELRSDTKDKRLSDGFFRIGKFEDGLAEGPVNSYLNPISALRLSVLQNSAVWVILNEIHIKRNPAD.

The Cytoplasmic segment spans residues 1–6 (MRLRNG). A helical; Signal-anchor for type II membrane protein membrane pass occupies residues 7–27 (TVATALVFITTFLSLSWYTAW). Residues 28 to 54 (QNGKEKLMAYQREFHALKERLRIAEHR) adopt a coiled-coil conformation. Over 28–536 (QNGKEKLMAY…EIHIKRNPAD (509 aa)) the chain is Lumenal. Asn-77 and Asn-458 each carry an N-linked (GlcNAc...) asparagine glycan.

This sequence belongs to the glycosyltransferase 54 family. A divalent metal cation is required as a cofactor. N-glycosylated.

The protein localises to the golgi apparatus membrane. Its subcellular location is the secreted. The catalysed reaction is N(4)-{beta-D-GlcNAc-(1-&gt;2)-alpha-D-Man-(1-&gt;3)-[beta-D-GlcNAc-(1-&gt;2)-alpha-D-Man-(1-&gt;6)]-beta-D-Man-(1-&gt;4)-beta-D-GlcNAc-(1-&gt;4)-beta-D-GlcNAc}-L-asparaginyl-[protein] + UDP-N-acetyl-alpha-D-glucosamine = N(4)-{beta-D-GlcNAc-(1-&gt;2)-[beta-D-GlcNAc-(1-&gt;4)]-alpha-D-Man-(1-&gt;3)-[beta-D-GlcNAc-(1-&gt;2)-alpha-D-Man-(1-&gt;6)]-beta-D-Man-(1-&gt;4)-beta-D-GlcNAc-(1-&gt;4)-beta-D-GlcNAc}-L-asparaginyl-[protein] + UDP + H(+). It catalyses the reaction an N(4)-{beta-D-GlcNAc-(1-&gt;2)-alpha-D-Man-(1-&gt;3)-[alpha-D-Man-(1-&gt;6)]-beta-D-Man-(1-&gt;4)-beta-D-GlcNAc-(1-&gt;4)-beta-D-GlcNAc}-L-asparaginyl-[protein] + UDP-N-acetyl-alpha-D-glucosamine = an N(4)-{beta-D-GlcNAc-(1-&gt;2)-[beta-D-GlcNAc-(1-&gt;4)]-alpha-D-Man-(1-&gt;3)-[alpha-D-Man-(1-&gt;6)]-beta-D-Man-(1-&gt;4)-beta-D-GlcNAc-(1-&gt;4)-beta-D-GlcNAc}-L-asparaginyl-[protein] + UDP + H(+). The enzyme catalyses an N(4)-{beta-D-GlcNAc-(1-&gt;2)-alpha-D-Man-(1-&gt;3)-[beta-D-GlcNAc-(1-&gt;2)-[beta-D-GlcNAc-(1-&gt;6)]-alpha-D-Man-(1-&gt;6)]-beta-D-Man-(1-&gt;4)-beta-D-GlcNAc-(1-&gt;4)-beta-D-GlcNAc}-L-asparaginyl-[protein] + UDP-N-acetyl-alpha-D-glucosamine = an N(4)-{beta-D-GlcNAc-(1-&gt;2)-[beta-D-GlcNAc-(1-&gt;4)]-alpha-D-Man-(1-&gt;3)-[beta-D-GlcNAc-(1-&gt;2)-[beta-D-GlcNAc-(1-&gt;6)]-alpha-D-Man-(1-&gt;6)]-beta-D-Man-(1-&gt;4)-beta-D-GlcNAc-(1-&gt;4)-beta-D-GlcNAc}-L-asparaginyl-[protein] + UDP + H(+). It carries out the reaction an N(4)-{beta-D-GlcNAc-(1-&gt;2)-alpha-D-Man-(1-&gt;3)-[beta-D-GlcNAc-(1-&gt;2)-alpha-D-Man-(1-&gt;6)]-beta-D-Man-(1-&gt;4)-beta-D-GlcNAc-(1-&gt;4)-[alpha-L-Fuc-(1-&gt;6)]-beta-D-GlcNAc}-L-asparaginyl-[protein] + UDP-N-acetyl-alpha-D-glucosamine = N(4)-{beta-D-GlcNAc-(1-&gt;2)-[beta-D-GlcNAc-(1-&gt;4)]-alpha-D-Man-(1-&gt;3)-[beta-D-GlcNAc-(1-&gt;2)-alpha-D-Man-(1-&gt;6)]-beta-D-Man-(1-&gt;4)-beta-D-GlcNAc-(1-&gt;4)-[alpha-L-Fuc-(1-&gt;6)]-beta-D-GlcNAc}-asparaginyl-[protein] + UDP + H(+). The catalysed reaction is an N(4)-{beta-D-GlcNAc-(1-&gt;2)-alpha-D-Man-(1-&gt;3)-[beta-D-Gal-(1-&gt;4)-beta-D-GlcNAc-(1-&gt;2)-alpha-D-Man-(1-&gt;6)]-beta-D-Man-(1-&gt;4)-beta-D-GlcNAc-(1-&gt;4)-beta-D-GlcNAc}-L-asparaginyl-[protein] + UDP-N-acetyl-alpha-D-glucosamine = an N(4)-{beta-D-GlcNAc-(1-&gt;2)-[beta-D-GlcNAc-(1-&gt;4)]-alpha-D-Man-(1-&gt;3)-[beta-D-Gal-(1-&gt;4)-beta-D-GlcNAc-(1-&gt;2)-alpha-D-Man-(1-&gt;6)]-beta-D-Man-(1-&gt;4)-beta-D-GlcNAc-(1-&gt;4)-beta-D-GlcNAc}-L-asparaginyl-[protein] + UDP + H(+). It catalyses the reaction N(4)-{beta-D-GlcNAc-(1-&gt;2)-alpha-D-Man-(1-&gt;3)-[alpha-D-Man-(1-&gt;3)-{alpha-D-Man-(1-&gt;6)}-alpha-D-Man-(1-&gt;6)]-beta-D-Man-(1-&gt;4)-beta-D-GlcNAc-(1-&gt;4)-beta-D-GlcNAc}-asparaginyl-[protein] + UDP-N-acetyl-alpha-D-glucosamine = N(4)-{beta-D-GlcNAc-(1-&gt;2)-[beta-D-GlcNAc-(1-&gt;4)]-alpha-D-Man-(1-&gt;3)-[alpha-D-Man-(1-&gt;3)-{alpha-D-Man-(1-&gt;6)}-alpha-D-Man-(1-&gt;6)]-beta-D-Man-(1-&gt;4)-beta-D-GlcNAc-(1-&gt;4)-beta-D-GlcNAc}-asparaginyl-[protein] + UDP + H(+). The enzyme catalyses N(4)-{beta-D-GlcNAc-(1-&gt;2)-alpha-D-Man-(1-&gt;3)-beta-D-Man-(1-&gt;4)-beta-D-GlcNAc-(1-&gt;4)-beta-D-GlcNAc}-asparaginyl-[protein] + UDP-N-acetyl-alpha-D-glucosamine = N(4)-{beta-D-GlcNAc-(1-&gt;2)-[beta-D-GlcNAc-(1-&gt;4)]-alpha-D-Man-(1-&gt;3)-beta-D-Man-(1-&gt;4)-beta-D-GlcNAc-(1-&gt;4)-beta-D-GlcNAc}-asparaginyl-[protein] + UDP + H(+). The protein operates within protein modification; protein glycosylation. With respect to regulation, inhibited by UDP. Glycosyltransferase that catalyze the transfer of GlcNAc from UDP-GlcNAc to the GlcNAcbeta1-2Manalpha1-3 arm of the core structure of N-linked glycans through a beta1-4 linkage and participates in the production of tri- and tetra-antennary N-linked sugar chains. Involved in glucose transport by mediating SLC2A2/GLUT2 glycosylation, thereby controlling cell-surface expression of SLC2A2 in pancreatic beta cells. The sequence is that of Alpha-1,3-mannosyl-glycoprotein 4-beta-N-acetylglucosaminyltransferase A from Xenopus tropicalis (Western clawed frog).